A 70-amino-acid polypeptide reads, in one-letter code: DNA-directed RNA polymerase subunit omega (70 aa).

The protein belongs to the RNA polymerase subunit omega family. In terms of assembly, the RNAP catalytic core consists of 2 alpha, 1 beta, 1 beta' and 1 omega subunit. When a sigma factor is associated with the core the holoenzyme is formed, which can initiate transcription.

The enzyme catalyses RNA(n) + a ribonucleoside 5'-triphosphate = RNA(n+1) + diphosphate. Promotes RNA polymerase assembly. Latches the N- and C-terminal regions of the beta' subunit thereby facilitating its interaction with the beta and alpha subunits. The chain is DNA-directed RNA polymerase subunit omega from Pelobacter propionicus (strain DSM 2379 / NBRC 103807 / OttBd1).